The primary structure comprises 430 residues: Elongation factor Tu (430 aa).

In terms of domain architecture, tr-type G spans 13–220; sequence RPHLNIGTIG…ACDKYIALPE (208 aa). The tract at residues 22 to 29 is G1; sequence GHVDHGKT. Residue 22–29 coordinates GTP; it reads GHVDHGKT. A Mg(2+)-binding site is contributed by T29. A G2 region spans residues 66 to 70; it reads GITIS. The G3 stretch occupies residues 87-90; the sequence is DCPG. GTP-binding positions include 87 to 91 and 142 to 145; these read DCPGH and NKCD. A G4 region spans residues 142-145; that stretch reads NKCD. Residues 188–190 form a G5 region; sequence SAL.

Belongs to the TRAFAC class translation factor GTPase superfamily. Classic translation factor GTPase family. EF-Tu/EF-1A subfamily. As to quaternary structure, monomer.

The protein resides in the cytoplasm. It carries out the reaction GTP + H2O = GDP + phosphate + H(+). Functionally, GTP hydrolase that promotes the GTP-dependent binding of aminoacyl-tRNA to the A-site of ribosomes during protein biosynthesis. This chain is Elongation factor Tu, found in Neorickettsia sennetsu (strain ATCC VR-367 / Miyayama) (Ehrlichia sennetsu).